The following is a 322-amino-acid chain: Fructose-1,6-bisphosphatase class 1 1 (322 aa).

The Mg(2+) site is built by Glu84, Asp103, Leu105, and Asp106. Substrate-binding positions include 106–109, Asn198, and Lys264; that span reads DGSS. Position 270 (Glu270) interacts with Mg(2+).

The protein belongs to the FBPase class 1 family. As to quaternary structure, homotetramer. Mg(2+) serves as cofactor.

Its subcellular location is the cytoplasm. It catalyses the reaction beta-D-fructose 1,6-bisphosphate + H2O = beta-D-fructose 6-phosphate + phosphate. It functions in the pathway carbohydrate biosynthesis; gluconeogenesis. This chain is Fructose-1,6-bisphosphatase class 1 1, found in Pseudoalteromonas translucida (strain TAC 125).